Consider the following 280-residue polypeptide: Putative pyruvate, phosphate dikinase regulatory protein (280 aa).

158-165 (GVSRTSKT) contacts ADP.

Belongs to the pyruvate, phosphate/water dikinase regulatory protein family. PDRP subfamily.

It carries out the reaction N(tele)-phospho-L-histidyl/L-threonyl-[pyruvate, phosphate dikinase] + ADP = N(tele)-phospho-L-histidyl/O-phospho-L-threonyl-[pyruvate, phosphate dikinase] + AMP + H(+). It catalyses the reaction N(tele)-phospho-L-histidyl/O-phospho-L-threonyl-[pyruvate, phosphate dikinase] + phosphate + H(+) = N(tele)-phospho-L-histidyl/L-threonyl-[pyruvate, phosphate dikinase] + diphosphate. Functionally, bifunctional serine/threonine kinase and phosphorylase involved in the regulation of the pyruvate, phosphate dikinase (PPDK) by catalyzing its phosphorylation/dephosphorylation. The protein is Putative pyruvate, phosphate dikinase regulatory protein of Lactobacillus gasseri (strain ATCC 33323 / DSM 20243 / BCRC 14619 / CIP 102991 / JCM 1131 / KCTC 3163 / NCIMB 11718 / NCTC 13722 / AM63).